Reading from the N-terminus, the 466-residue chain is mRNA-capping enzyme subunit alpha (466 aa).

Lys-67 serves as the catalytic N6-GMP-lysine intermediate. The disordered stretch occupies residues 408-466 (REQGLKNAQKQFNHQASARSSLSQQHSTEPEQSQDQPKYVDDDDDNWSDDEPDTKRQKI). A compositionally biased stretch (polar residues) spans 413-443 (KNAQKQFNHQASARSSLSQQHSTEPEQSQDQ). Residues 448-459 (DDDDDNWSDDEP) show a composition bias toward acidic residues.

Belongs to the eukaryotic GTase family. As to quaternary structure, heterodimer. The mRNA-capping enzyme is composed of two separate chains alpha and beta, respectively a mRNA guanylyltransferase and an mRNA 5'-triphosphate monophosphatase.

The protein resides in the nucleus. The catalysed reaction is a 5'-end diphospho-ribonucleoside in mRNA + GTP + H(+) = a 5'-end (5'-triphosphoguanosine)-ribonucleoside in mRNA + diphosphate. Its function is as follows. Second step of mRNA capping. Transfer of the GMP moiety of GTP to the 5'-end of RNA via an enzyme-GMP covalent reaction intermediate. The sequence is that of mRNA-capping enzyme subunit alpha (CEG1) from Kluyveromyces lactis (strain ATCC 8585 / CBS 2359 / DSM 70799 / NBRC 1267 / NRRL Y-1140 / WM37) (Yeast).